The sequence spans 457 residues: Glycerol-3-phosphate acyltransferase 3 (457 aa).

The helical transmembrane segment at 14 to 34 (WLTLVGSLILLPSAFGLSLGI) threads the bilayer. 2 positions are modified to phosphoserine: serine 68 and serine 77. The next 2 membrane-spanning stretches (helical) occupy residues 137–157 (ISPK…CFLL) and 161–181 (VTLA…VGQL). The HXXXXD motif signature appears at 229–234 (HTSPID). The interval 429–457 (GNGSPSLALDSSTVDNHGSPEPAFRSESL) is disordered. The segment covering 431 to 444 (GSPSLALDSSTVDN) has biased composition (polar residues).

It belongs to the 1-acyl-sn-glycerol-3-phosphate acyltransferase family.

It localises to the endoplasmic reticulum membrane. It carries out the reaction sn-glycerol 3-phosphate + an acyl-CoA = a 1-acyl-sn-glycero-3-phosphate + CoA. The catalysed reaction is a 1-acyl-sn-glycero-3-phosphate + an acyl-CoA = a 1,2-diacyl-sn-glycero-3-phosphate + CoA. The enzyme catalyses dodecanoyl-CoA + sn-glycerol 3-phosphate = 1-dodecanoyl-sn-glycerol 3-phosphate + CoA. It catalyses the reaction sn-glycerol 3-phosphate + hexadecanoyl-CoA = 1-hexadecanoyl-sn-glycero-3-phosphate + CoA. It carries out the reaction sn-glycerol 3-phosphate + (9Z)-octadecenoyl-CoA = 1-(9Z-octadecenoyl)-sn-glycero-3-phosphate + CoA. The catalysed reaction is (9Z,12Z)-octadecadienoyl-CoA + sn-glycerol 3-phosphate = 1-(9Z,12Z)-octadecadienoyl-sn-glycero-3-phosphate + CoA. The enzyme catalyses 1-tetradecanoyl-sn-glycerol 3-phosphate + (9Z)-octadecenoyl-CoA = 1-tetradecanoyl-2-(9Z)-octadecenoyl-sn-glycero-3-phosphate + CoA. It catalyses the reaction 1-hexadecanoyl-sn-glycero-3-phosphate + (9Z)-octadecenoyl-CoA = 1-hexadecanoyl-2-(9Z-octadecenoyl)-sn-glycero-3-phosphate + CoA. It carries out the reaction 1-(9Z-octadecenoyl)-sn-glycero-3-phosphate + (9Z)-octadecenoyl-CoA = 1,2-di-(9Z-octadecenoyl)-sn-glycero-3-phosphate + CoA. The catalysed reaction is 1-(6Z,9Z,12Z-octadecatrienoyl)-sn-glycero-3-phosphate + (9Z)-octadecenoyl-CoA = (6Z,9Z,12Z)-octadecatrienoyl-2-(9Z)-octadecenoyl-sn-glycero-3-phosphate + CoA. The enzyme catalyses 1-(9Z,12Z,15Z)-octadecatrienoyl-sn-glycero-3-phosphate + (9Z)-octadecenoyl-CoA = 1-(9Z,12Z,15Z)-octadecatrienoyl-2-(9Z)-octadecenoyl-sn-glycero-3-phosphate + CoA. It catalyses the reaction 1-(9Z-octadecenoyl)-sn-glycero-3-phosphate + tetradecanoyl-CoA = 1-(9Z)-octadecenoyl-2-tetradecanoyl-sn-glycero-3-phosphate + CoA. It carries out the reaction 1-(9Z-octadecenoyl)-sn-glycero-3-phosphate + hexadecanoyl-CoA = 1-(9Z)-octadecenoyl-2-hexadecanoyl-sn-glycero-3-phosphate + CoA. The catalysed reaction is 1-(9Z-octadecenoyl)-sn-glycero-3-phosphate + octadecanoyl-CoA = 1-(9Z-octadecenoyl)-2-octadecanoyl-sn-glycero-3-phosphate + CoA. The enzyme catalyses 1-(9Z-octadecenoyl)-sn-glycero-3-phosphate + (9Z,12Z)-octadecadienoyl-CoA = 1-(9Z)-octadecenoyl-2-(9Z,12Z)-octadecadienoyl-sn-glycero-3-phosphate + CoA. It catalyses the reaction 1-(5Z,8Z,11Z,14Z-eicosatetraenoyl)-sn-glycero-3-phosphate + (9Z)-octadecenoyl-CoA = 1-(5Z,8Z,11Z,14Z)-eicosatetraenoyl-2-(9Z)-octadecenoyl-sn-glycero-3-phosphate + CoA. Its pathway is glycerolipid metabolism; triacylglycerol biosynthesis. It functions in the pathway phospholipid metabolism; CDP-diacylglycerol biosynthesis; CDP-diacylglycerol from sn-glycerol 3-phosphate: step 1/3. Functionally, converts glycerol-3-phosphate to 1-acyl-sn-glycerol-3-phosphate (lysophosphatidic acid or LPA) by incorporating an acyl moiety at the sn-1 position of the glycerol backbone. Also converts LPA into 1,2-diacyl-sn-glycerol-3-phosphate (phosphatidic acid or PA) by incorporating an acyl moiety at the sn-2 position of the glycerol backbone. Protects cells against lipotoxicity. This chain is Glycerol-3-phosphate acyltransferase 3, found in Rattus norvegicus (Rat).